The primary structure comprises 400 residues: Trans-enoyl reductase ucsL (400 aa).

50 to 53 provides a ligand contact to NADP(+); sequence TDHK. 145–152 contributes to the substrate binding site; it reads SVHGSVAL. NADP(+) is bound by residues 204 to 207, 227 to 230, Y245, and 292 to 293; these read STAC, SPRN, and LE. 313–317 is a binding site for substrate; the sequence is GPVMF. 389-390 is an NADP(+) binding site; it reads VS.

It belongs to the zinc-containing alcohol dehydrogenase family. In terms of assembly, monomer.

It functions in the pathway mycotoxin biosynthesis. In terms of biological role, trans-enoyl reductase; part of the gene cluster that mediates the biosynthesis of UCS1025A, a member of the pyrrolizidinone family that acts as a strong telomerase inhibitor and displays potent antibacterial and antitumor properties. These compounds share a hemiaminal-containing pyrrolizidinone core fused with a gamma-lactone, giving a furopyrrolizidine that is connected to a decalin fragment. The polyketide synthase module (PKS) of the PKS-NRPS ucsA is responsible for the synthesis of the polyketide backbone via the condensation of an acetyl-CoA starter unit with 6 malonyl-CoA units. The downstream nonribosomal peptide synthetase (NRPS) module then amidates the carboxyl end of the polyketide with a 2S,3S-methylproline derived from L-isoleucine by the 2-oxoglutarate-dependent dioxygenase ucsF which converts L-isoleucine to (4S,5S)-4-methylpyrroline-5-carboxylate that is further converted to 2S,3S-methylproline by the pyrroline-5-carboxylate reductase ucsG. Reductive release of the completed aminoacyl polyketide from the assembly line can form the 3-pyrrolin-2-one structure via an intramolecular Knoevenagel reaction. Because ucsA lacks a designated enoylreductase (ER) domain, the required activity is provided the enoyl reductase ucsL. This keto acyclic precursor is the substrate of the Diels-Alderase ucsH, that catalyzes the Diels-Alder cycloaddition. Oxidation of the 3S-methyl group to a carboxylate by the cytochrome P450 monooxygenase ucsK allows an oxa-Michael cyclization that might involve the reductase/dehydrogenase ucsI and which furnishes the furopyrrolizidine. The oxidase ucsJ likely plays a critical role in stereoselective reduction of the C5-C6 double bond to afford the required R-configured carboxylate group. Further enolization and oxidation at C5 by an unidentified enzyme affords the last intermediate that can undergo oxa-Michael cyclization to yield UCS1025A. This chain is Trans-enoyl reductase ucsL, found in Acremonium sp.